The following is a 244-amino-acid chain: MTDLPEKEGGRFHASVLTLYPEMFPGPLGISLAGKALAEGKWQLDTVQIRDFAEGRHRMVDDTPSGGGAGMVMKADVVARALDSVDDGRPMLLMTPRGKPLTQERVRALADGAGAIILCGHFEGVDERVIEGRNLEEISIGDYILSGGETAAIVLLDAVVRLLPGVMGNRESGETESFETGLLEHPHYTRPQEWEGRAIPDILTSGNHGAIDKWRLEQAERITRERRPDLWEAYCKNRRKIGGQ.

S-adenosyl-L-methionine-binding positions include Gly-120 and 140 to 145 (IGDYIL).

The protein belongs to the RNA methyltransferase TrmD family. In terms of assembly, homodimer.

It localises to the cytoplasm. It catalyses the reaction guanosine(37) in tRNA + S-adenosyl-L-methionine = N(1)-methylguanosine(37) in tRNA + S-adenosyl-L-homocysteine + H(+). Functionally, specifically methylates guanosine-37 in various tRNAs. The sequence is that of tRNA (guanine-N(1)-)-methyltransferase from Brucella canis (strain ATCC 23365 / NCTC 10854 / RM-666).